Reading from the N-terminus, the 393-residue chain is NADH-quinone oxidoreductase subunit D (393 aa).

It belongs to the complex I 49 kDa subunit family. In terms of assembly, NDH-1 is composed of 14 different subunits. Subunits NuoB, C, D, E, F, and G constitute the peripheral sector of the complex.

The protein localises to the cell inner membrane. It catalyses the reaction a quinone + NADH + 5 H(+)(in) = a quinol + NAD(+) + 4 H(+)(out). In terms of biological role, NDH-1 shuttles electrons from NADH, via FMN and iron-sulfur (Fe-S) centers, to quinones in the respiratory chain. The immediate electron acceptor for the enzyme in this species is believed to be ubiquinone. Couples the redox reaction to proton translocation (for every two electrons transferred, four hydrogen ions are translocated across the cytoplasmic membrane), and thus conserves the redox energy in a proton gradient. The polypeptide is NADH-quinone oxidoreductase subunit D (Ehrlichia ruminantium (strain Welgevonden)).